The primary structure comprises 247 residues: Carboxy-S-adenosyl-L-methionine synthase (247 aa).

S-adenosyl-L-methionine-binding positions include Tyr-40, 65–67 (GSS), 90–91 (DN), 122–123 (DI), Asn-137, and Arg-204.

The protein belongs to the class I-like SAM-binding methyltransferase superfamily. Cx-SAM synthase family. In terms of assembly, homodimer.

The catalysed reaction is prephenate + S-adenosyl-L-methionine = carboxy-S-adenosyl-L-methionine + 3-phenylpyruvate + H2O. Catalyzes the conversion of S-adenosyl-L-methionine (SAM) to carboxy-S-adenosyl-L-methionine (Cx-SAM). This chain is Carboxy-S-adenosyl-L-methionine synthase, found in Pseudomonas savastanoi pv. phaseolicola (strain 1448A / Race 6) (Pseudomonas syringae pv. phaseolicola (strain 1448A / Race 6)).